A 373-amino-acid polypeptide reads, in one-letter code: 4-hydroxy-3-methylbut-2-en-1-yl diphosphate synthase (flavodoxin) (373 aa).

[4Fe-4S] cluster contacts are provided by Cys-270, Cys-273, Cys-305, and Glu-312.

The protein belongs to the IspG family. [4Fe-4S] cluster is required as a cofactor.

It catalyses the reaction (2E)-4-hydroxy-3-methylbut-2-enyl diphosphate + oxidized [flavodoxin] + H2O + 2 H(+) = 2-C-methyl-D-erythritol 2,4-cyclic diphosphate + reduced [flavodoxin]. It participates in isoprenoid biosynthesis; isopentenyl diphosphate biosynthesis via DXP pathway; isopentenyl diphosphate from 1-deoxy-D-xylulose 5-phosphate: step 5/6. Its function is as follows. Converts 2C-methyl-D-erythritol 2,4-cyclodiphosphate (ME-2,4cPP) into 1-hydroxy-2-methyl-2-(E)-butenyl 4-diphosphate. This Klebsiella pneumoniae subsp. pneumoniae (strain ATCC 700721 / MGH 78578) protein is 4-hydroxy-3-methylbut-2-en-1-yl diphosphate synthase (flavodoxin).